Reading from the N-terminus, the 426-residue chain is MIQQRVIRYIEKEHLFLPDDKLLVALSGGADSVALLRVLHTAGYQCEAAHCNFHLRGEESNRDERFVRQLCQKYGIRLHITDFNTTQYATEKRISIEMAARELRYNWFEKIKEECGAHVIAVAHHQDDSVETMLFNLIRGTGITGLLGIRPRNGAIVRPLLCINREEIIRYLQQIGQDFVTDSTNLEDEYTRNKIRLNLLPLMQEINPSVKNSLIETSNHLNDVATIYNKVIDEAKTRIITPEGIRIDALLDEPAPEAFLFETLHPLGFNSAQIKDIANSLHGQPGKQFVSKEWRVIKDRNLLLLETIRPEDESTLPYQLIKEEREFTPDFRIPREKETACFDADKLNEEIHCRKWQAGDTFIPFGMTGKKKISDYLTDRKFSISQKERQWVLCCGERIAWLIGERTDNRFRIDETTKRVIIYKIV.

27 to 32 contributes to the ATP binding site; sequence SGGADS.

The protein belongs to the tRNA(Ile)-lysidine synthase family.

Its subcellular location is the cytoplasm. It carries out the reaction cytidine(34) in tRNA(Ile2) + L-lysine + ATP = lysidine(34) in tRNA(Ile2) + AMP + diphosphate + H(+). Functionally, ligates lysine onto the cytidine present at position 34 of the AUA codon-specific tRNA(Ile) that contains the anticodon CAU, in an ATP-dependent manner. Cytidine is converted to lysidine, thus changing the amino acid specificity of the tRNA from methionine to isoleucine. The chain is tRNA(Ile)-lysidine synthase from Bacteroides thetaiotaomicron (strain ATCC 29148 / DSM 2079 / JCM 5827 / CCUG 10774 / NCTC 10582 / VPI-5482 / E50).